Here is a 347-residue protein sequence, read N- to C-terminus: S-adenosylmethionine:tRNA ribosyltransferase-isomerase (347 aa).

This sequence belongs to the QueA family. In terms of assembly, monomer.

The protein resides in the cytoplasm. The enzyme catalyses 7-aminomethyl-7-carbaguanosine(34) in tRNA + S-adenosyl-L-methionine = epoxyqueuosine(34) in tRNA + adenine + L-methionine + 2 H(+). The protein operates within tRNA modification; tRNA-queuosine biosynthesis. Its function is as follows. Transfers and isomerizes the ribose moiety from AdoMet to the 7-aminomethyl group of 7-deazaguanine (preQ1-tRNA) to give epoxyqueuosine (oQ-tRNA). The polypeptide is S-adenosylmethionine:tRNA ribosyltransferase-isomerase (Gluconobacter oxydans (strain 621H) (Gluconobacter suboxydans)).